The chain runs to 636 residues: 1-deoxy-D-xylulose-5-phosphate synthase (636 aa).

Thiamine diphosphate contacts are provided by residues His72 and 113–115; that span reads GHA. Asp144 contacts Mg(2+). Residues 145–146, Asn174, Tyr287, and Glu370 each bind thiamine diphosphate; that span reads GS. Asn174 lines the Mg(2+) pocket.

Belongs to the transketolase family. DXPS subfamily. As to quaternary structure, homodimer. Requires Mg(2+) as cofactor. The cofactor is thiamine diphosphate.

It carries out the reaction D-glyceraldehyde 3-phosphate + pyruvate + H(+) = 1-deoxy-D-xylulose 5-phosphate + CO2. It participates in metabolic intermediate biosynthesis; 1-deoxy-D-xylulose 5-phosphate biosynthesis; 1-deoxy-D-xylulose 5-phosphate from D-glyceraldehyde 3-phosphate and pyruvate: step 1/1. In terms of biological role, catalyzes the acyloin condensation reaction between C atoms 2 and 3 of pyruvate and glyceraldehyde 3-phosphate to yield 1-deoxy-D-xylulose-5-phosphate (DXP). The chain is 1-deoxy-D-xylulose-5-phosphate synthase from Synechococcus sp. (strain ATCC 27144 / PCC 6301 / SAUG 1402/1) (Anacystis nidulans).